The sequence spans 215 residues: Thiopurine S-methyltransferase (215 aa).

S-adenosyl-L-methionine is bound by residues W10, L45, E66, and R123.

Belongs to the class I-like SAM-binding methyltransferase superfamily. TPMT family.

Its subcellular location is the cytoplasm. It catalyses the reaction S-adenosyl-L-methionine + a thiopurine = S-adenosyl-L-homocysteine + a thiopurine S-methylether.. This is Thiopurine S-methyltransferase from Pseudomonas putida (strain W619).